We begin with the raw amino-acid sequence, 78 residues long: U-scoloptoxin(13)-Er1a (78 aa).

The signal sequence occupies residues 1–24; the sequence is MFPSWSTTFVLCMGLCSLMNGALA.

Belongs to the scoloptoxin-13 family. In terms of processing, contains 4 disulfide bonds. Expressed by the venom gland.

The protein resides in the secreted. In Ethmostigmus rubripes (Giant centipede), this protein is U-scoloptoxin(13)-Er1a.